A 122-amino-acid polypeptide reads, in one-letter code: Large ribosomal subunit protein uL14c (122 aa).

Belongs to the universal ribosomal protein uL14 family. In terms of assembly, part of the 50S ribosomal subunit.

The protein localises to the plastid. It is found in the chloroplast. Its function is as follows. Binds to 23S rRNA. The polypeptide is Large ribosomal subunit protein uL14c (Lotus japonicus (Lotus corniculatus var. japonicus)).